A 54-amino-acid polypeptide reads, in one-letter code: U-reduvitoxin-Pr7a (54 aa).

A signal peptide spans 1-23 (MDFLRILLFVLACIMALFTSAIA). 3 disulfide bridges follow: C26–C41, C33–C46, and C40–C53.

It belongs to the venom Ptu1-like knottin family. In terms of tissue distribution, expressed by the venom gland.

The protein resides in the secreted. Binds reversibly and blocks P/Q-type voltage-gated calcium channels (Cav). In Platymeris rhadamanthus (Red spot assassin bug), this protein is U-reduvitoxin-Pr7a.